The primary structure comprises 488 residues: Cardiolipin synthase 2 (488 aa).

Helical transmembrane passes span 8-28 and 39-59; these read IIINILLVSAFLLNLVFAFII and IWAWLLVLVFLPLVGFILYLL. PLD phosphodiesterase domains are found at residues 223-250 and 401-428; these read MNNRNHRKIVVIDGTIGYVGGFNVGDEY and DNGFLHSKTLVIDDEVASVGTANMDNRS. Active-site residues include His-228, Lys-230, Asp-235, His-406, Lys-408, and Asp-413.

The protein belongs to the phospholipase D family. Cardiolipin synthase subfamily.

It is found in the cell membrane. The enzyme catalyses 2 a 1,2-diacyl-sn-glycero-3-phospho-(1'-sn-glycerol) = a cardiolipin + glycerol. Its function is as follows. Catalyzes the reversible phosphatidyl group transfer from one phosphatidylglycerol molecule to another to form cardiolipin (CL) (diphosphatidylglycerol) and glycerol. In Staphylococcus epidermidis (strain ATCC 35984 / DSM 28319 / BCRC 17069 / CCUG 31568 / BM 3577 / RP62A), this protein is Cardiolipin synthase 2 (cls2).